Consider the following 280-residue polypeptide: tRNA pseudouridine synthase A (280 aa).

The active-site Nucleophile is the aspartate 55. Tyrosine 110 is a binding site for substrate.

This sequence belongs to the tRNA pseudouridine synthase TruA family.

The enzyme catalyses uridine(38/39/40) in tRNA = pseudouridine(38/39/40) in tRNA. Functionally, formation of pseudouridine at positions 38, 39 and 40 in the anticodon stem and loop of transfer RNAs. The chain is tRNA pseudouridine synthase A from Methanosphaerula palustris (strain ATCC BAA-1556 / DSM 19958 / E1-9c).